The primary structure comprises 193 residues: uncharacterized protein (193 aa).

This is an uncharacterized protein from Methanocaldococcus jannaschii (strain ATCC 43067 / DSM 2661 / JAL-1 / JCM 10045 / NBRC 100440) (Methanococcus jannaschii).